Reading from the N-terminus, the 371-residue chain is N-methyl-L-tryptophan oxidase (371 aa).

4–34 contributes to the FAD binding site; the sequence is DLIVIGSGSVGSAAGYYASQAGLNVLMIDSA. At cysteine 307 the chain carries S-8alpha-FAD cysteine.

Belongs to the MSOX/MTOX family. MTOX subfamily. In terms of assembly, monomer. It depends on FAD as a cofactor.

The enzyme catalyses N(alpha)-methyl-L-tryptophan + O2 + H2O = L-tryptophan + formaldehyde + H2O2. In terms of biological role, catalyzes the oxidative demethylation of N-methyl-L-tryptophan. This is N-methyl-L-tryptophan oxidase from Yersinia pseudotuberculosis serotype O:1b (strain IP 31758).